The following is a 335-amino-acid chain: Proline racemase (335 aa).

The active-site Proton acceptor is the Cys-91. Cys-255 functions as the Proton donor in the catalytic mechanism.

It belongs to the proline racemase family. In terms of assembly, homodimer.

The catalysed reaction is L-proline = D-proline. Functionally, catalyzes the reversible interconversion of L- and D-proline. Plays an important role in the regulation of intra- and extracellular amino acid pools, allowing the bacterium to profit from host precursors and enzymatic pathways. Strong B-cell mitogen. The protein is Proline racemase of Clostridioides difficile (strain 630) (Peptoclostridium difficile).